The chain runs to 561 residues: Acylcarnitine hydrolase (561 aa).

A signal peptide spans 1 to 26 (MARKQPHSWLNAVLFGLLLILIHVWG). A disulfide bridge links Cys-97 with Cys-125. Residue Ser-230 is the Acyl-ester intermediate of the active site. Residues Cys-282 and Cys-293 are joined by a disulfide bond. Residues Glu-347 and His-459 each act as charge relay system in the active site.

This sequence belongs to the type-B carboxylesterase/lipase family. In terms of tissue distribution, expressed in liver, stomach and kidney.

It localises to the microsome. The protein localises to the endoplasmic reticulum. It catalyses the reaction all-trans-retinyl hexadecanoate + H2O = all-trans-retinol + hexadecanoate + H(+). The enzyme catalyses an O-acyl-(R)-carnitine + H2O = (R)-carnitine + a fatty acid + H(+). In terms of biological role, hydrolase with high activity towards palmitoylcarnitine. Is also active with p-nitrophenylacetate and alpha-naphthylacetate. May also hydrolyze retinyl esters. This is Acylcarnitine hydrolase from Rattus norvegicus (Rat).